A 776-amino-acid polypeptide reads, in one-letter code: 5-methyltetrahydropteroyltriglutamate--homocysteine methyltransferase (776 aa).

5-methyltetrahydropteroyltri-L-glutamate contacts are provided by residues 16–19 (RELK) and Lys112. L-homocysteine is bound by residues 432–434 (IGS) and Glu485. L-methionine contacts are provided by residues 432–434 (IGS) and Glu485. Residues 516–517 (RC) and Trp562 contribute to the 5-methyltetrahydropteroyltri-L-glutamate site. Residue Asp600 coordinates L-homocysteine. Asp600 serves as a coordination point for L-methionine. Glu606 lines the 5-methyltetrahydropteroyltri-L-glutamate pocket. The Zn(2+) site is built by His642, Cys644, and Glu666. The active-site Proton donor is the His695. Cys727 contacts Zn(2+). A disordered region spans residues 755 to 776 (HAGAVHAGTPATRAEHAESALA). Residues 767–776 (RAEHAESALA) are compositionally biased toward basic and acidic residues.

It belongs to the vitamin-B12 independent methionine synthase family. The cofactor is Zn(2+).

It carries out the reaction 5-methyltetrahydropteroyltri-L-glutamate + L-homocysteine = tetrahydropteroyltri-L-glutamate + L-methionine. It functions in the pathway amino-acid biosynthesis; L-methionine biosynthesis via de novo pathway; L-methionine from L-homocysteine (MetE route): step 1/1. In terms of biological role, catalyzes the transfer of a methyl group from 5-methyltetrahydrofolate to homocysteine resulting in methionine formation. The chain is 5-methyltetrahydropteroyltriglutamate--homocysteine methyltransferase from Ralstonia nicotianae (strain ATCC BAA-1114 / GMI1000) (Ralstonia solanacearum).